A 496-amino-acid chain; its full sequence is Sporulation-killing factor biosynthesis protein SkfC (496 aa).

Helical transmembrane passes span 1–21 (MNSL…LLFI), 224–244 (VSGM…LVFM), 248–268 (TSII…SLTL), 291–311 (LLGI…VFIC), 331–351 (IVQI…TSLL), 399–419 (LLMI…IIVS), and 443–463 (FIFG…CVLV).

It is found in the membrane. In terms of biological role, required for production of the bacteriocin SkfA. This Bacillus subtilis (strain 168) protein is Sporulation-killing factor biosynthesis protein SkfC.